The chain runs to 730 residues: Synaptogenesis protein syg-1 (730 aa).

An N-terminal signal peptide occupies residues 1–18 (MVRWQTWPLLLLFQLVTC). At 19-551 (QQLQQRIVEA…WIVITAKFDR (533 aa)) the chain is on the extracellular side. Ig-like domains follow at residues 23–123 (QRIV…AKLT), 131–265 (PKIV…VKLS), 270–352 (PQIN…IKLN), 357–433 (ARIM…QILS), and 441–540 (PPTV…RNIL). 5 disulfide bridges follow: C44–C104, C152–C246, C292–C336, C378–C420, and C462–C519. N93 and N206 each carry an N-linked (GlcNAc...) asparagine glycan. A helical transmembrane segment spans residues 552–572 (MVALAIISAGVLLVSLLCCLC). The Cytoplasmic portion of the chain corresponds to 573–730 (MCRSNCRSRK…RPISRTSTHV (158 aa)).

Belongs to the immunoglobulin superfamily. As to quaternary structure, interacts with skr-1. Interacts with syg-2. Interacts with the WAVE regulatory complex; the interaction leads to formation of a synaptic F-actin network that is required for synapse formation and axon branching. As to expression, expression in head motor neurons, occasionally in HSN neurons and weakly in other cells in the vulval region. Expressed in the primary synapse region of HSNL motor neuron.

The protein resides in the cell membrane. Its subcellular location is the cell projection. It is found in the axon. It localises to the synapse. In terms of biological role, cell adhesion protein. Involved in synapse formation in the HSNL egg-laying motor neuron. Inhibits assembly of the SCF(sel-10) E3 ubiquitin ligase complex at synapses, and protects them from elimination. Also required for F-actin assembly at the synaptic region and for axon branch formation. In Caenorhabditis elegans, this protein is Synaptogenesis protein syg-1.